Consider the following 488-residue polypeptide: Glutamyl-tRNA(Gln) amidotransferase subunit A (488 aa).

Catalysis depends on charge relay system residues lysine 77 and serine 152. Catalysis depends on serine 176, which acts as the Acyl-ester intermediate.

This sequence belongs to the amidase family. GatA subfamily. As to quaternary structure, heterotrimer of A, B and C subunits.

The enzyme catalyses L-glutamyl-tRNA(Gln) + L-glutamine + ATP + H2O = L-glutaminyl-tRNA(Gln) + L-glutamate + ADP + phosphate + H(+). Its function is as follows. Allows the formation of correctly charged Gln-tRNA(Gln) through the transamidation of misacylated Glu-tRNA(Gln) in organisms which lack glutaminyl-tRNA synthetase. The reaction takes place in the presence of glutamine and ATP through an activated gamma-phospho-Glu-tRNA(Gln). The protein is Glutamyl-tRNA(Gln) amidotransferase subunit A of Streptococcus pyogenes serotype M1.